The primary structure comprises 87 residues: Small ribosomal subunit protein bS20 (87 aa).

The segment at 1 to 22 is disordered; it reads MAHHKSAIKRIKQNAKKNARNR.

It belongs to the bacterial ribosomal protein bS20 family.

In terms of biological role, binds directly to 16S ribosomal RNA. This is Small ribosomal subunit protein bS20 from Pelobacter propionicus (strain DSM 2379 / NBRC 103807 / OttBd1).